A 70-amino-acid polypeptide reads, in one-letter code: DNA-binding transcriptional activator AlpA (70 aa).

A DNA-binding region (H-T-H motif) is located at residues L12–N31.

Functionally, positive regulator of the expression of the slpA gene. When overexpressed, leads to suppression of the capsule overproduction and UV sensitivity phenotypes of cells mutant for the Lon ATP-dependent protease. Part of the cryptic P4-like prophage CP4-57. Overexpression of AlpA leads to excision of the CP4-57 prophage by IntA. This inactivates ssrA (the gene upstream of the prophage) that encodes tmRNA which is required to rescue stalled ribosomes in a process known as trans-translation. The polypeptide is DNA-binding transcriptional activator AlpA (Escherichia coli (strain K12)).